Consider the following 409-residue polypeptide: Transcription termination factor 3, mitochondrial (409 aa).

The N-terminal 64 residues, 1–64, are a transit peptide targeting the mitochondrion; the sequence is MALLAQQLSR…KTDRALFSWS (64 aa). Positions 74–93 are disordered; sequence RKSSTNSTLLPSVSEQPEKI.

It belongs to the mTERF family.

Its subcellular location is the mitochondrion. In terms of biological role, binds promoter DNA and regulates initiation of transcription. Required for normal mitochondrial transcription and translation, and for normal assembly of mitochondrial respiratory complexes. Required for normal mitochondrial function. Maintains 16S rRNA levels and functions in mitochondrial ribosome assembly by regulating the biogenesis of the 39S ribosomal subunit. The sequence is that of Transcription termination factor 3, mitochondrial (Mterf3) from Rattus norvegicus (Rat).